A 218-amino-acid chain; its full sequence is Probable transaldolase (218 aa).

K83 (schiff-base intermediate with substrate) is an active-site residue.

It belongs to the transaldolase family. Type 3B subfamily.

It is found in the cytoplasm. The enzyme catalyses D-sedoheptulose 7-phosphate + D-glyceraldehyde 3-phosphate = D-erythrose 4-phosphate + beta-D-fructose 6-phosphate. Its pathway is carbohydrate degradation; pentose phosphate pathway; D-glyceraldehyde 3-phosphate and beta-D-fructose 6-phosphate from D-ribose 5-phosphate and D-xylulose 5-phosphate (non-oxidative stage): step 2/3. In terms of biological role, transaldolase is important for the balance of metabolites in the pentose-phosphate pathway. In Parvibaculum lavamentivorans (strain DS-1 / DSM 13023 / NCIMB 13966), this protein is Probable transaldolase.